The following is a 552-amino-acid chain: Acyl-CoA synthetase FUM10 (552 aa).

183 to 194 (ELFTSGTTGAPK) serves as a coordination point for AMP. The tract at residues 463 to 536 (EIEHVARLHD…QEIPYNRTGK (74 aa)) is AMP-binding.

This sequence belongs to the ATP-dependent AMP-binding enzyme family.

It participates in mycotoxin biosynthesis. Its function is as follows. Acyl-CoA synthetase; part of the gene cluster that mediates the biosynthesis of fumonisins B1 (FB1), B2 (FB2), B3 (FB3), and B4 (FB4), which are carcinogenic mycotoxins. Within the pathway, FUM10 is involved the addition of the tricarballylic moieties to the carbon backbone. FUM10 catalyzes the CoA activation of citrate to form tricarballylic acid. The biosynthesis starts with the FUM1-catalyzed carbon chain assembly from one molecule of acetyl-CoA, eight molecules of malonyl-CoA, and two molecules of methionine (in S-adenosyl form). The C18 polyketide chain is released from the enzyme by a nucleophilic attack of a carbanion, which is derived from R-carbon of alanine by decarboxylation, on the carbonyl carbon of polyketide acyl chain. This step is catalyzed by the pyridoxal 5'-phosphate-dependent aminoacyl transferase FUM8. The resultant 3-keto intermediate is then stereospecifically reduced to a 3-hydroxyl product by reductase FUM13. Subsequent oxidations at C-10 by the cytochrome P450 monooxygenase FUM2, C-14 and C-15 by FUM6, FUM12 or FUM15, tricarballylic esterification of the hydroxyl groups on C-14 and C-15 by acyltransferase FUM14, and C-5 hydroxylation by 2-keto-glutarate-dependent dioxygenase FUM3 furnish the biosynthesis of fumonisins. The tricarballylic moieties are most likely derived from the citric acid cycle, and their addition to the carbon backbone may involve FUM7, FUM10, FUM11 and FUM14. The polypeptide is Acyl-CoA synthetase FUM10 (Gibberella moniliformis (strain M3125 / FGSC 7600) (Maize ear and stalk rot fungus)).